A 67-amino-acid chain; its full sequence is Large ribosomal subunit protein bL35 (67 aa).

The protein belongs to the bacterial ribosomal protein bL35 family.

This Acidiphilium cryptum (strain JF-5) protein is Large ribosomal subunit protein bL35.